A 598-amino-acid chain; its full sequence is Arginine--tRNA ligase (598 aa).

The 'HIGH' region signature appears at 131-141 (ANPTGPMHVGH). The disordered stretch occupies residues 288-308 (KLPPPKSKKGQPPAQPQPDEE).

This sequence belongs to the class-I aminoacyl-tRNA synthetase family. Monomer.

The protein localises to the cytoplasm. It catalyses the reaction tRNA(Arg) + L-arginine + ATP = L-arginyl-tRNA(Arg) + AMP + diphosphate. The chain is Arginine--tRNA ligase from Anaeromyxobacter sp. (strain K).